The primary structure comprises 259 residues: Imidazole glycerol phosphate synthase subunit HisF (259 aa).

Active-site residues include Asp11 and Asp130.

The protein belongs to the HisA/HisF family. As to quaternary structure, heterodimer of HisH and HisF.

The protein resides in the cytoplasm. It carries out the reaction 5-[(5-phospho-1-deoxy-D-ribulos-1-ylimino)methylamino]-1-(5-phospho-beta-D-ribosyl)imidazole-4-carboxamide + L-glutamine = D-erythro-1-(imidazol-4-yl)glycerol 3-phosphate + 5-amino-1-(5-phospho-beta-D-ribosyl)imidazole-4-carboxamide + L-glutamate + H(+). Its pathway is amino-acid biosynthesis; L-histidine biosynthesis; L-histidine from 5-phospho-alpha-D-ribose 1-diphosphate: step 5/9. IGPS catalyzes the conversion of PRFAR and glutamine to IGP, AICAR and glutamate. The HisF subunit catalyzes the cyclization activity that produces IGP and AICAR from PRFAR using the ammonia provided by the HisH subunit. The chain is Imidazole glycerol phosphate synthase subunit HisF from Solidesulfovibrio magneticus (strain ATCC 700980 / DSM 13731 / RS-1) (Desulfovibrio magneticus).